We begin with the raw amino-acid sequence, 437 residues long: Isthmin-2 (437 aa).

Positions 1–25 (MLRARKGLWVLLSVLLAFWIERAIS) are cleaved as a signal peptide. The segment at 156-191 (DSGEDGTGQAEDEEDDYDYDSGEPIPSGLGKTDGDW) is disordered. Residues 165–176 (AEDEEDDYDYDS) show a composition bias toward acidic residues. The region spanning 197-242 (EEKEEEWSTWSPCSVTCGHGNQTRSRSCGDFCTSTESQSCDLVPCP) is the TSP type-1 domain. 3 disulfide bridges follow: C209-C236, C213-C241, and C224-C228. The N-linked (GlcNAc...) asparagine glycan is linked to N217. Residues N258 and N349 are each glycosylated (N-linked (GlcNAc...) asparagine). Residues 262-425 (PYGTDVGSCE…LHCMENPQQD (164 aa)) form the AMOP domain.

It belongs to the isthmin family.

The protein localises to the secreted. This chain is Isthmin-2 (ism2), found in Danio rerio (Zebrafish).